The primary structure comprises 1132 residues: Phosphatidylinositide phosphatase SAC2 (1132 aa).

Residues 167 to 518 form the SAC domain; the sequence is LKMFMDSESF…GDSISRQYAG (352 aa). A hSac2 domain is found at 593 to 760; that stretch reads RSHQELISQL…KSSKPHEDII (168 aa). A phosphoserine mark is found at Ser-827 and Ser-830. The tract at residues 846–875 is disordered; sequence ESDGDMSSDNDSYHSDEFLTNSKSDEDRQL. A compositionally biased stretch (basic and acidic residues) spans 856 to 874; sequence DSYHSDEFLTNSKSDEDRQ. Phosphoserine is present on residues Ser-878, Ser-881, Ser-907, and Ser-910. Disordered stretches follow at residues 923–942 and 974–1017; these read VAHG…KSPS and LSET…LDVS. Ser-1103 bears the Phosphoserine mark.

Homodimer. Interacts with OCRL and RAB5A. Interacts with INPP5B and INPP4A. Interacts with STAT3; the interaction is independent of STAT3 'Tyr-705' phosphorylation status. Ubiquitous. Highly expressed in brain.

Its subcellular location is the membrane. The protein resides in the clathrin-coated pit. The protein localises to the early endosome. It localises to the recycling endosome. The enzyme catalyses a myo-inositol phosphate + H2O = myo-inositol + phosphate. Functionally, inositol 4-phosphatase which mainly acts on phosphatidylinositol 4-phosphate. May be functionally linked to OCRL, which converts phosphatidylinositol 4,5-bisphosphate to phosphatidylinositol, for a sequential dephosphorylation of phosphatidylinositol 4,5-bisphosphate at the 5 and 4 position of inositol, thus playing an important role in the endocytic recycling. Regulator of TF:TFRC and integrins recycling pathway, is also involved in cell migration mechanisms. Modulates AKT/GSK3B pathway by decreasing AKT and GSK3B phosphorylation. Negatively regulates STAT3 signaling pathway through inhibition of STAT3 phosphorylation and translocation to the nucleus. Functionally important modulator of cardiac myocyte size and of the cardiac response to stress. May play a role as negative regulator of axon regeneration after central nervous system injuries. This is Phosphatidylinositide phosphatase SAC2 from Homo sapiens (Human).